The sequence spans 481 residues: Glycogen synthase (481 aa).

Lys-15 serves as a coordination point for ADP-alpha-D-glucose.

This sequence belongs to the glycosyltransferase 1 family. Bacterial/plant glycogen synthase subfamily.

The enzyme catalyses [(1-&gt;4)-alpha-D-glucosyl](n) + ADP-alpha-D-glucose = [(1-&gt;4)-alpha-D-glucosyl](n+1) + ADP + H(+). The protein operates within glycan biosynthesis; glycogen biosynthesis. In terms of biological role, synthesizes alpha-1,4-glucan chains using ADP-glucose. This chain is Glycogen synthase, found in Mesorhizobium japonicum (strain LMG 29417 / CECT 9101 / MAFF 303099) (Mesorhizobium loti (strain MAFF 303099)).